We begin with the raw amino-acid sequence, 929 residues long: Isoleucine--tRNA ligase (929 aa).

Residues 58–68 carry the 'HIGH' region motif; it reads PYANGDIHIGH. E563 is an L-isoleucyl-5'-AMP binding site. Positions 605-609 match the 'KMSKS' region motif; it reads KMSKS. An ATP-binding site is contributed by K608. Zn(2+) contacts are provided by C892, C895, C912, and C915.

Belongs to the class-I aminoacyl-tRNA synthetase family. IleS type 1 subfamily. Monomer. It depends on Zn(2+) as a cofactor.

Its subcellular location is the cytoplasm. It catalyses the reaction tRNA(Ile) + L-isoleucine + ATP = L-isoleucyl-tRNA(Ile) + AMP + diphosphate. Catalyzes the attachment of isoleucine to tRNA(Ile). As IleRS can inadvertently accommodate and process structurally similar amino acids such as valine, to avoid such errors it has two additional distinct tRNA(Ile)-dependent editing activities. One activity is designated as 'pretransfer' editing and involves the hydrolysis of activated Val-AMP. The other activity is designated 'posttransfer' editing and involves deacylation of mischarged Val-tRNA(Ile). The sequence is that of Isoleucine--tRNA ligase from Neisseria gonorrhoeae (strain ATCC 700825 / FA 1090).